Here is a 249-residue protein sequence, read N- to C-terminus: Small ribosomal subunit protein eS6 (249 aa).

Disordered regions lie at residues P161 to T181 and L194 to K249. Positions R216–A229 are enriched in basic and acidic residues. Phosphoserine occurs at positions 235, 236, 240, 244, and 247. Residues S236–K249 show a composition bias toward low complexity.

The protein belongs to the eukaryotic ribosomal protein eS6 family. Component of the small ribosomal subunit. Part of the small subunit (SSU) processome, composed of more than 70 proteins and the RNA chaperone small nucleolar RNA (snoRNA) U3. Ribosomal protein S6 is the major substrate of protein kinases in eukaryote ribosomes. The phosphorylation is stimulated by growth factors, tumor promoting agents, and mitogens. It is dephosphorylated at growth arrest.

The protein localises to the cytoplasm. It is found in the nucleus. Its subcellular location is the nucleolus. In terms of biological role, component of the 40S small ribosomal subunit. Plays an important role in controlling cell growth and proliferation through the selective translation of particular classes of mRNA. Part of the small subunit (SSU) processome, first precursor of the small eukaryotic ribosomal subunit. During the assembly of the SSU processome in the nucleolus, many ribosome biogenesis factors, an RNA chaperone and ribosomal proteins associate with the nascent pre-rRNA and work in concert to generate RNA folding, modifications, rearrangements and cleavage as well as targeted degradation of pre-ribosomal RNA by the RNA exosome. In Xenopus laevis (African clawed frog), this protein is Small ribosomal subunit protein eS6 (rps6).